The chain runs to 405 residues: Prenyltransferase phqA (405 aa).

The dimethylallyl diphosphate site is built by tyrosine 195, lysine 262, and glutamine 332.

Belongs to the tryptophan dimethylallyltransferase family.

It participates in alkaloid biosynthesis. Prenyltransferase; part of the gene cluster that mediates the biosynthesis of paraherquamide, a fungal indole alkaloid that belongs to a family of natural products containing a characteristic bicyclo[2.2.2]diazaoctane core. The first steps in the biosynthesis of paraherquamide is the production of the beta-methyl-proline precursor from L-isoleucine. They require oxidation of a terminally hydroxylated L-isoleucine to the corresponding aldehyde by enzymes which have still to be identified. Spontaneous cyclization and dehydration would yield the 4-methyl pyrolline-5-carboxylic acid, which is then reduced by the pyrroline-5-carboxylate reductase phqD leading to the beta-methyl-proline precursor. The next step of paraherquamide biosynthesis involves coupling of beta-methyl-proline and L-tryptophan by the bimodular NRPS phqB, to produce a monooxopiperazine intermediate. The reductase (R) domain of phqB utilizes NADPH for hydride transfer to reduce the thioester bond of the T domain-tethered linear dipeptide to a hemithioaminal intermediate, which spontaneously cleaves the C-S bond to release the aldehyde product. This compound undergoes spontaneous cyclization and dehydration to give a dienamine which is reverse prenylated at C-2 by the reverse prenyltransferase phqJ. The other prenyltransferase present in the cluster, phqI may be a redundant gene in the pathway. During biosynthetic assembly, the key step to produce the polycyclic core is catalyzed by the bifunctional reductase and intramolecular [4+2] Diels-Alderase, phqE, resulting in formation of the [2.2.2] diazaoctane intermediate preparaherquamide. Following formation of preparaherquamide, an indole 2,3-epoxidation-initiated pinacol-like rearrangement is catalyzed by the phqK FAD-dependent monooxygenase. The prenyltransferase phqA, the cytochrome P450 monooxygenase phqL, and the FAD-linked oxidoreductase phqH (or the cytochrome P450 monooxygenase phqM), are proposed to be involved in the formation of the pyran ring. The FAD-dependent monooxygenase phqK is likely responsible for generation of the spiro-oxindole, and the N-methylation is likely mediated by the phqN methyltransferase leading to the isolable natural product paraherquamide F. However, the order of these biosynthetic steps has still to be determined. In late-stage paraherquamide biosynthesis, the third P450 monooxygenase, phqO, is probably responsible for the C-14 hydroxylation, transforming paraherquamide F to paraherquamide G, and paraherquamide E to the final product paraherquamide A. The expansion from the 6-membered ring pyran (in paraherquamides F and G) to the 7-membered dioxepin ring (in paraherquamides A and E) represents a poorly understood but intriguing process that probably involves the 2-oxoglutarate-dependent dioxygenase phqC. Finally, the remaining members of the paraherquamide cluster, including phqI as well as phqM (or phqH), do not have a clearly prescribed role and appear to be redundant. The chain is Prenyltransferase phqA from Penicillium fellutanum.